Consider the following 145-residue polypeptide: 3-dehydroquinate dehydratase (145 aa).

Residue Tyr-24 is the Proton acceptor of the active site. Substrate contacts are provided by Asn-76, His-82, and Asp-89. Residue His-102 is the Proton donor of the active site. Substrate-binding positions include 103–104 (VS) and Arg-113.

The protein belongs to the type-II 3-dehydroquinase family. As to quaternary structure, homododecamer.

The enzyme catalyses 3-dehydroquinate = 3-dehydroshikimate + H2O. It participates in metabolic intermediate biosynthesis; chorismate biosynthesis; chorismate from D-erythrose 4-phosphate and phosphoenolpyruvate: step 3/7. Its function is as follows. Catalyzes a trans-dehydration via an enolate intermediate. This Janthinobacterium sp. (strain Marseille) (Minibacterium massiliensis) protein is 3-dehydroquinate dehydratase.